Reading from the N-terminus, the 382-residue chain is Protein arginine N-methyltransferase 2 (382 aa).

ANK repeat units lie at residues 22–46 (AAQT…FQDD) and 48–80 (LGWS…AVDK). Residues 134–382 (KTSAGDNLVF…RLPIAKMSLI (249 aa)) form the RMT2 domain. S-adenosyl-L-methionine is bound by residues phenylalanine 143, methionine 177, 205–210 (FGLGIV), 228–230 (EAH), 255–256 (WQ), and aspartate 284.

It belongs to the class I-like SAM-binding methyltransferase superfamily. RMT2 methyltransferase family. As to quaternary structure, monomer.

The protein resides in the cytoplasm. It is found in the nucleus. In terms of biological role, S-adenosyl-L-methionine-dependent protein-arginine N-methyltransferase that methylates the delta-nitrogen atom of arginine residues to form N5-methylarginine (type IV) in target proteins. Monomethylates ribosomal protein L12. This is Protein arginine N-methyltransferase 2 from Cryptococcus neoformans var. neoformans serotype D (strain JEC21 / ATCC MYA-565) (Filobasidiella neoformans).